The chain runs to 586 residues: Asparagine synthetase, nodule [glutamine-hydrolyzing] (586 aa).

Cysteine 2 (for GATase activity) is an active-site residue. One can recognise a Glutamine amidotransferase type-2 domain in the interval 2-185 (CGILAVLGCS…PGHLYSSKER (184 aa)). L-glutamine-binding positions include 50–54 (RLAIV), 75–77 (NGE), and aspartate 98. Residues 193–517 (PPWFNEAIIP…PQNSARLTVP (325 aa)) enclose the Asparagine synthetase domain. Residues leucine 232, valine 268, and 342–343 (SG) contribute to the ATP site.

In terms of tissue distribution, root nodules.

It carries out the reaction L-aspartate + L-glutamine + ATP + H2O = L-asparagine + L-glutamate + AMP + diphosphate + H(+). It participates in amino-acid biosynthesis; L-asparagine biosynthesis; L-asparagine from L-aspartate (L-Gln route): step 1/1. This chain is Asparagine synthetase, nodule [glutamine-hydrolyzing] (AS1), found in Pisum sativum (Garden pea).